Here is a 249-residue protein sequence, read N- to C-terminus: Probable transcriptional regulatory protein MXAN_4974 (249 aa).

The protein belongs to the TACO1 family.

The protein localises to the cytoplasm. The protein is Probable transcriptional regulatory protein MXAN_4974 of Myxococcus xanthus (strain DK1622).